Here is a 481-residue protein sequence, read N- to C-terminus: 3-isopropylmalate dehydratase large subunit (481 aa).

Positions 363, 423, and 426 each coordinate [4Fe-4S] cluster. A disordered region spans residues 432-459 (DQLKPGERSASTSNRNFEGRQGPGGRTH).

It belongs to the aconitase/IPM isomerase family. LeuC type 1 subfamily. As to quaternary structure, heterodimer of LeuC and LeuD. Requires [4Fe-4S] cluster as cofactor.

It carries out the reaction (2R,3S)-3-isopropylmalate = (2S)-2-isopropylmalate. It functions in the pathway amino-acid biosynthesis; L-leucine biosynthesis; L-leucine from 3-methyl-2-oxobutanoate: step 2/4. Catalyzes the isomerization between 2-isopropylmalate and 3-isopropylmalate, via the formation of 2-isopropylmaleate. The chain is 3-isopropylmalate dehydratase large subunit from Corynebacterium glutamicum (strain ATCC 13032 / DSM 20300 / JCM 1318 / BCRC 11384 / CCUG 27702 / LMG 3730 / NBRC 12168 / NCIMB 10025 / NRRL B-2784 / 534).